Reading from the N-terminus, the 114-residue chain is Translation initiation factor 1A (114 aa).

The S1-like domain occupies 19-91 (SEFRLPGEGE…EKGDIVHKYE (73 aa)).

It belongs to the eIF-1A family.

Its function is as follows. Seems to be required for maximal rate of protein biosynthesis. Enhances ribosome dissociation into subunits and stabilizes the binding of the initiator Met-tRNA(I) to 40 S ribosomal subunits. The polypeptide is Translation initiation factor 1A (eIF1A) (Pyrobaculum aerophilum (strain ATCC 51768 / DSM 7523 / JCM 9630 / CIP 104966 / NBRC 100827 / IM2)).